The primary structure comprises 419 residues: Heparan-sulfate 6-O-sulfotransferase 3-B (419 aa).

Over 1-7 (MNDKPNK) the chain is Cytoplasmic. A helical; Signal-anchor for type II membrane protein membrane pass occupies residues 8-28 (WIFIPILAILFVMIGYQYVCP). At 29 to 419 (AGGQACHFRT…EDYASQVVRW (391 aa)) the chain is on the lumenal side. An N-linked (GlcNAc...) asparagine glycan is attached at asparagine 77. 101–109 (HIQKTGGTT) provides a ligand contact to 3'-phosphoadenylyl sulfate. Substrate-binding positions include 131–132 (KK), arginine 148, tryptophan 153, and histidine 158. Histidine 158 functions as the Proton acceptor in the catalytic mechanism. The 3'-phosphoadenylyl sulfate site is built by arginine 191 and serine 199. The substrate site is built by histidine 203 and tryptophan 210. Residues asparagine 270 and asparagine 275 are each glycosylated (N-linked (GlcNAc...) asparagine). 323-325 (TQI) provides a ligand contact to 3'-phosphoadenylyl sulfate. Asparagine 326 carries an N-linked (GlcNAc...) asparagine glycan. A 3'-phosphoadenylyl sulfate-binding site is contributed by 329–330 (RA). Residues asparagine 393 and asparagine 402 are each glycosylated (N-linked (GlcNAc...) asparagine).

It belongs to the sulfotransferase 6 family. In terms of tissue distribution, in early somitogenesis, expressed in presumptive forebrain and midbrain, tail bud and Kupffer's vesicle. During mid-somitogenesis, ubiquitous expression which is strongest in the somites and eye. During late somitogenesis, predominantly expressed in eye, hindbrain and ventral somites. At 24 hours post-fertilization (hpf), restricted to lens and neural retina, brain, otic vesicle and somites. At 36 hpf, brain expression is restricted to telencephalon. At 48 hpf, restricted to telencephalon and pectoral fin.

The protein resides in the membrane. The enzyme catalyses alpha-D-glucosaminyl-[heparan sulfate](n) + 3'-phosphoadenylyl sulfate = 6-sulfo-alpha-D-glucosaminyl-[heparan sulfate](n) + adenosine 3',5'-bisphosphate + H(+). Functionally, 6-O-sulfation enzyme which catalyzes the transfer of sulfate from 3'-phosphoadenosine 5'-phosphosulfate (PAPS) to position 6 of the N-sulfoglucosamine residue (GlcNS) of heparan sulfate. The protein is Heparan-sulfate 6-O-sulfotransferase 3-B of Danio rerio (Zebrafish).